Consider the following 352-residue polypeptide: UDP-N-acetylglucosamine--N-acetylmuramyl-(pentapeptide) pyrophosphoryl-undecaprenol N-acetylglucosamine transferase (352 aa).

UDP-N-acetyl-alpha-D-glucosamine is bound by residues 12–14 (TGG), N124, R160, S188, and Q287.

The protein belongs to the glycosyltransferase 28 family. MurG subfamily.

The protein localises to the cell inner membrane. The catalysed reaction is di-trans,octa-cis-undecaprenyl diphospho-N-acetyl-alpha-D-muramoyl-L-alanyl-D-glutamyl-meso-2,6-diaminopimeloyl-D-alanyl-D-alanine + UDP-N-acetyl-alpha-D-glucosamine = di-trans,octa-cis-undecaprenyl diphospho-[N-acetyl-alpha-D-glucosaminyl-(1-&gt;4)]-N-acetyl-alpha-D-muramoyl-L-alanyl-D-glutamyl-meso-2,6-diaminopimeloyl-D-alanyl-D-alanine + UDP + H(+). It functions in the pathway cell wall biogenesis; peptidoglycan biosynthesis. Cell wall formation. Catalyzes the transfer of a GlcNAc subunit on undecaprenyl-pyrophosphoryl-MurNAc-pentapeptide (lipid intermediate I) to form undecaprenyl-pyrophosphoryl-MurNAc-(pentapeptide)GlcNAc (lipid intermediate II). The protein is UDP-N-acetylglucosamine--N-acetylmuramyl-(pentapeptide) pyrophosphoryl-undecaprenol N-acetylglucosamine transferase of Dechloromonas aromatica (strain RCB).